A 199-amino-acid polypeptide reads, in one-letter code: V-set and transmembrane domain-containing protein 5 (199 aa).

Positions 1 to 27 (MRPLRCGERTQGIPLGLLAFWVTAARC) are cleaved as a signal peptide. The Extracellular segment spans residues 28 to 146 (LQSQGVSLYI…VSEIRYEDLH (119 aa)). Residues 35–138 (LYIPQSAINA…QSGTILLRVS (104 aa)) form the Ig-like C2-type domain. N-linked (GlcNAc...) asparagine glycosylation is found at Asn-43, Asn-87, and Asn-101. A helical membrane pass occupies residues 147-167 (FVAVFFALLAAVAVVLISLMW). Residues 168–199 (VCNQCAYKFQRKRRYKLKESTTEEIEMKEVEC) lie on the Cytoplasmic side of the membrane. The important for CDC42-dependent filopodia induction stretch occupies residues 169–185 (CNQCAYKFQRKRRYKLK).

In terms of assembly, can homooligomerize through cis interactions within the same cell membrane. N-glycosylated. In terms of tissue distribution, highly expressed in the central nervous system (CNS), with the highest expression in thalamus, hippocampus, cerebrum, midbrain and spinal cord. Also highly expressed in stomach, kidney and small intestine.

It localises to the cell membrane. It is found in the cell projection. The protein resides in the dendrite. The protein localises to the axon. Functionally, cell adhesion-like membrane protein of the central nervous system (CNS) which modulates both the position and complexity of central neurons by altering their membrane morphology and dynamics. Involved in the formation of neuronal dendrites and protrusions including dendritic filopodia. In synaptogenesis, regulates synapse formation by altering dendritic spine morphology and actin distribution. Promotes formation of unstable neuronal spines such as thin and branched types. Regulates neuronal morphogenesis and migration during cortical development in the brain. The polypeptide is V-set and transmembrane domain-containing protein 5 (Mus musculus (Mouse)).